We begin with the raw amino-acid sequence, 380 residues long: Mitogen-activated protein kinase 3 (380 aa).

Ala-2 bears the N-acetylalanine mark. One can recognise a Protein kinase domain in the interval 43 to 331 (YTQLQYIGEG…VEEALAHPYL (289 aa)). ATP-binding positions include 49-57 (IGEGAYGMV) and Lys-72. Residue Asp-167 is the Proton acceptor of the active site. Position 199 is a phosphothreonine (Thr-199). Thr-203 carries the phosphothreonine; by MAP2K1 and MAP2K2 modification. Positions 203–205 (TEY) match the TXY motif. Position 205 is a phosphotyrosine; by MAP2K1 and MAP2K2 (Tyr-205). Position 208 is a phosphothreonine; by autocatalysis (Thr-208).

It belongs to the protein kinase superfamily. CMGC Ser/Thr protein kinase family. MAP kinase subfamily. Binds both upstream activators and downstream substrates in multimolecular complexes. Found in a complex with at least BRAF, HRAS, MAP2K1/MEK1, MAPK3 and RGS14. Interacts with ADAM15, ARRB2, CANX, DAPK1 (via death domain), HSF4, IER3, MAP2K1/MEK1, MORG1, NISCH, PEA15, SGK1 and MKNK2. MKNK2 isoform 1 binding prevents from dephosphorylation and inactivation. Interacts with TPR. Interacts with HSF1 (via D domain and preferentially with hyperphosphorylated form); this interaction occurs upon heat shock. Interacts with CDKN2AIP. Interacts with CAVIN4. Interacts with GIT1; this interaction is necessary for MAPK3 localization to focal adhesions. Interacts with ZNF263. Interacts with EBF4. It depends on Mg(2+) as a cofactor. Post-translationally, phosphorylated upon FLT3 and KIT signaling. Ligand-activated ALK induces tyrosine phosphorylation. Dephosphorylated by PTPRJ at Tyr-205. Dually phosphorylated on Thr-203 and Tyr-205, which activates the enzyme. Ubiquitinated by TRIM15 via 'Lys-63'-linked ubiquitination; leading to activation. Deubiquitinated by CYLD. In terms of tissue distribution, highest levels within the nervous system, expressed in different tissues, mostly in intestine, placenta and lung.

It is found in the cytoplasm. The protein localises to the nucleus. Its subcellular location is the membrane. It localises to the caveola. The protein resides in the cell junction. It is found in the focal adhesion. It catalyses the reaction L-seryl-[protein] + ATP = O-phospho-L-seryl-[protein] + ADP + H(+). The enzyme catalyses L-threonyl-[protein] + ATP = O-phospho-L-threonyl-[protein] + ADP + H(+). Phosphorylated by MAP2K1/MEK1 and MAP2K2/MEK2 on Thr-203 and Tyr-205 in response to external stimuli like insulin or NGF. Both phosphorylations are required for activity. This phosphorylation causes dramatic conformational changes, which enable full activation and interaction of MAPK1/ERK2 with its substrates. Dephosphorylated and inactivated by DUSP3, DUSP6 and DUSP9. Functionally, serine/threonine kinase which acts as an essential component of the MAP kinase signal transduction pathway. MAPK1/ERK2 and MAPK3/ERK1 are the 2 MAPKs which play an important role in the MAPK/ERK cascade. They participate also in a signaling cascade initiated by activated KIT and KITLG/SCF. Depending on the cellular context, the MAPK/ERK cascade mediates diverse biological functions such as cell growth, adhesion, survival and differentiation through the regulation of transcription, translation, cytoskeletal rearrangements. The MAPK/ERK cascade also plays a role in initiation and regulation of meiosis, mitosis, and postmitotic functions in differentiated cells by phosphorylating a number of transcription factors. About 160 substrates have already been discovered for ERKs. Many of these substrates are localized in the nucleus, and seem to participate in the regulation of transcription upon stimulation. However, other substrates are found in the cytosol as well as in other cellular organelles, and those are responsible for processes such as translation, mitosis and apoptosis. Moreover, the MAPK/ERK cascade is also involved in the regulation of the endosomal dynamics, including lysosome processing and endosome cycling through the perinuclear recycling compartment (PNRC); as well as in the fragmentation of the Golgi apparatus during mitosis. The substrates include transcription factors (such as ATF2, BCL6, ELK1, ERF, FOS, HSF4 or SPZ1), cytoskeletal elements (such as CANX, CTTN, GJA1, MAP2, MAPT, PXN, SORBS3 or STMN1), regulators of apoptosis (such as BAD, BTG2, CASP9, DAPK1, IER3, MCL1 or PPARG), regulators of translation (such as EIF4EBP1) and a variety of other signaling-related molecules (like ARHGEF2, DEPTOR, FRS2 or GRB10). Protein kinases (such as RAF1, RPS6KA1/RSK1, RPS6KA3/RSK2, RPS6KA2/RSK3, RPS6KA6/RSK4, SYK, MKNK1/MNK1, MKNK2/MNK2, RPS6KA5/MSK1, RPS6KA4/MSK2, MAPKAPK3 or MAPKAPK5) and phosphatases (such as DUSP1, DUSP4, DUSP6 or DUSP16) are other substrates which enable the propagation the MAPK/ERK signal to additional cytosolic and nuclear targets, thereby extending the specificity of the cascade. This Rattus norvegicus (Rat) protein is Mitogen-activated protein kinase 3 (Mapk3).